A 288-amino-acid polypeptide reads, in one-letter code: Quinate/shikimate dehydrogenase (288 aa).

2 residues coordinate substrate: lysine 71 and aspartate 107. Residues 132–135 (AGGA), 155–158 (NRRD), lysine 205, 232–235 (CVYN), and glycine 255 contribute to the NAD(+) site.

The protein belongs to the shikimate dehydrogenase family. Homodimer.

The catalysed reaction is L-quinate + NAD(+) = 3-dehydroquinate + NADH + H(+). It carries out the reaction L-quinate + NADP(+) = 3-dehydroquinate + NADPH + H(+). The enzyme catalyses shikimate + NADP(+) = 3-dehydroshikimate + NADPH + H(+). It catalyses the reaction shikimate + NAD(+) = 3-dehydroshikimate + NADH + H(+). The protein operates within metabolic intermediate biosynthesis; chorismate biosynthesis; chorismate from D-erythrose 4-phosphate and phosphoenolpyruvate: step 4/7. Its function is as follows. The actual biological function of YdiB remains unclear, nor is it known whether 3-dehydroshikimate or quinate represents the natural substrate. Catalyzes the reversible NAD-dependent reduction of both 3-dehydroshikimate (DHSA) and 3-dehydroquinate to yield shikimate (SA) and quinate, respectively. It can use both NAD or NADP for catalysis, however it has higher catalytic efficiency with NAD. This chain is Quinate/shikimate dehydrogenase, found in Escherichia coli O81 (strain ED1a).